Reading from the N-terminus, the 164-residue chain is UPF0304 protein HSM_1818 (164 aa).

It belongs to the UPF0304 family.

This is UPF0304 protein HSM_1818 from Histophilus somni (strain 2336) (Haemophilus somnus).